Reading from the N-terminus, the 209-residue chain is Large ribosomal subunit protein uL3 (209 aa).

The disordered stretch occupies residues 126 to 148 (HGQSRGPMAHGSRYHRRPGSMGP).

This sequence belongs to the universal ribosomal protein uL3 family. Part of the 50S ribosomal subunit. Forms a cluster with proteins L14 and L19.

In terms of biological role, one of the primary rRNA binding proteins, it binds directly near the 3'-end of the 23S rRNA, where it nucleates assembly of the 50S subunit. This is Large ribosomal subunit protein uL3 from Listeria innocua serovar 6a (strain ATCC BAA-680 / CLIP 11262).